A 428-amino-acid polypeptide reads, in one-letter code: uncharacterized protein (428 aa).

A run of 10 helical transmembrane segments spans residues 26 to 46 (VALT…DDVF), 51 to 71 (AGID…VSVL), 90 to 110 (AAPL…SALL), 135 to 155 (TPFL…TLVG), 177 to 197 (MAPA…WLLG), 223 to 243 (LLIK…AHPV), 278 to 298 (TLLF…TGVV), 314 to 334 (LLTV…IDNI), 359 to 379 (TFWW…AVAA), and 407 to 427 (VVTA…YFVF).

The protein belongs to the CitM (TC 2.A.11) transporter family.

It is found in the cell membrane. This is an uncharacterized protein from Mycobacterium tuberculosis (strain CDC 1551 / Oshkosh).